Here is a 75-residue protein sequence, read N- to C-terminus: Putative DNA-directed RNA polymerase subunit omega (75 aa).

This sequence belongs to the RNA polymerase subunit omega family.

It localises to the plastid. Its subcellular location is the chloroplast. The enzyme catalyses RNA(n) + a ribonucleoside 5'-triphosphate = RNA(n+1) + diphosphate. In terms of biological role, may be involved in RNA polymerase activity. This Porphyra purpurea (Red seaweed) protein is Putative DNA-directed RNA polymerase subunit omega (rpoZ).